We begin with the raw amino-acid sequence, 341 residues long: Nicotinate-nucleotide--dimethylbenzimidazole phosphoribosyltransferase (341 aa).

The active-site Proton acceptor is glutamate 306.

It belongs to the CobT family.

It catalyses the reaction 5,6-dimethylbenzimidazole + nicotinate beta-D-ribonucleotide = alpha-ribazole 5'-phosphate + nicotinate + H(+). Its pathway is nucleoside biosynthesis; alpha-ribazole biosynthesis; alpha-ribazole from 5,6-dimethylbenzimidazole: step 1/2. Functionally, catalyzes the synthesis of alpha-ribazole-5'-phosphate from nicotinate mononucleotide (NAMN) and 5,6-dimethylbenzimidazole (DMB). This chain is Nicotinate-nucleotide--dimethylbenzimidazole phosphoribosyltransferase, found in Methylocella silvestris (strain DSM 15510 / CIP 108128 / LMG 27833 / NCIMB 13906 / BL2).